Consider the following 615-residue polypeptide: Crinkler effector protein 15 (615 aa).

Residues Met-1 to Pro-17 form the signal peptide. Residues Val-18–Lys-54 are LQLFLAK domain. The interval Gln-55–Ile-136 is DWL domain. Positions His-137–Pro-143 match the HVLVXXP motif motif. The N-linked (GlcNAc...) asparagine glycan is linked to Asn-531.

Belongs to the Crinkler effector family.

It localises to the secreted. It is found in the host nucleus. Functionally, secreted effector that elicits necrosis in host plants, a characteristic of plant innate immunity. This Phytophthora infestans (Potato late blight agent) protein is Crinkler effector protein 15.